Here is a 454-residue protein sequence, read N- to C-terminus: Serine/arginine (SR)-type shuttling mRNA binding protein HRB1 (454 aa).

Residues 1 to 141 (MSDQERGSEN…SSGARGDYGP (141 aa)) form a disordered region. The segment covering 14-24 (SRSRSRSPVRR) has biased composition (basic residues). 2 stretches are compositionally biased toward basic and acidic residues: residues 25 to 38 (RMSD…DNHL) and 50 to 113 (KFAD…DYPR). Omega-N-methylarginine is present on Arg127. RRM domains follow at residues 161–237 (NSIF…QDNP) and 261–338 (HEVI…SKES). A phosphoserine mark is found at Ser338, Ser343, and Ser355. The 78-residue stretch at 376–453 (RLIYCSNLPF…CDLDISYAKR (78 aa)) folds into the RRM 3 domain.

Methylated by HMT1.

The protein localises to the cytoplasm. It localises to the nucleus. Its subcellular location is the P-body. It is found in the stress granule. Binds to intron-containing transcripts and is involved in quality control for the export of spliced mRNAs from the nucleus. Binds to pre-mRNAs until splicing is completed or until faulty mRNAs are degraded. On correctly spliced mRNAs, GBP2 and HRB1 recruit MEX67 to allow nuclear export. On faulty mRNAs, GBP2 and HRB1 associate with the TRAMP complex that guides those pre-mRNAs to the exosome for degradation. This is Serine/arginine (SR)-type shuttling mRNA binding protein HRB1 from Saccharomyces cerevisiae (strain ATCC 204508 / S288c) (Baker's yeast).